The primary structure comprises 262 residues: MPAKLPDDTTLRLPRILCLHGGGTNARIFRAQCRVLSTLLSPHFRLCFAEAPFPSQPGPDVVSVYRHFGDFKSWIPMPPNPSISPTNVAKKILNSLRHTIEEDDRSGADGEWVAVLGFSQGARLAASLLFQEQNGGSGMVGVYGGVNFRFAVLLAGRGPMIPLDMDAMASVSSAVLSLPTIHVHGLQDPGLEHHRELLERYCNRETASLIEWEGNHRVPIKMKDARVVVEEILKIAQKTGCLVPPTIQGGGTSNCGALLLDR.

Residues Ser119, Asp188, and His216 each act as charge relay system in the active site.

This sequence belongs to the LovG family.

It participates in secondary metabolite biosynthesis. Probable esterase; part of the gene cluster that mediates the biosynthesis of azaphilones, a class of fungal metabolites characterized by a highly oxygenated pyrano-quinone bicyclic core and exhibiting a broad range of bioactivities. In the first step, the non-reducing polyketide synthase azaA forms the hexaketide precursor from successive condensations of five malonyl-CoA units, presumably with a simple acetyl-CoA starter unit. The reactive polyketide chain then undergoes a PT-mediated C2-C7 cyclization to afford the aromatic ring and is eventually released as an aldehyde through the R-domain. The putative ketoreductase azaE is proposed to catalyze the reduction of the terminal ketone resulting in the early culture product FK17-P2a. The monooxygenase azaH was demonstrated to be the only enzyme required to convert FK17-P2a to azanigerone E. AzaH first hydroxylates the benzaldehyde intermediate FK17-P2a at C4, which triggers the formation of the pyran-ring to afford azanigerone E. In parallel, the 2,4-dimethylhexanoyl chain is synthesized by the HR-PKS azaB and is proposed to be transferred to the C4-hydroxyl of azanigerone E by the acyltransferase azaD directly from the ACP domain of azaB. Alternatively, the 2,4-dimethyl-hexanoyl chain may be offloaded from the HR-PKS as a carboxylic acid and converted to an acyl-CoA by azaF. The resulting acyl-CoA molecule could then be taken up as a substrate by AzaD to form azanigerone B. To yield the carboxylic acid substituent in azanigerone A, the hydroxypropyl side chain of azanigerone B would need to undergo a C-C oxidative cleavage catalyzed by cytochrome P450 AzaI. AzaI is proposed to act on a vicinal diol that leads to a C-C bond scission either through an alkoxyradical intermediate or a peroxy complex. In the biosynthesis of azanigerone A, azanigerone B first undergoes hydroxylation at C10, possibly catalyzed by one of the two FAD-dependent monooxygenases encoded in the cluster, azaG or azaL, resulting in the vicinal diol azanigerone C. Oxidative cleavage of azanigerone C by azaI would yield the corresponding aldehyde derivative of azanigerone A. Finally, the dehydrogenase azaJ is proposed to convert the aldehyde functional group into the carboxylic acid, completing the conversion from azanigerone B to azanigerone A. Alternatively, the oxidation of aldehyde to carboxylic acid may be catalyzed by the same P450 enzyme azaI via consecutive oxidation or by endogenous alcohol dehydrogenase. The protein is Probable esterase azaC of Aspergillus niger (strain ATCC 1015 / CBS 113.46 / FGSC A1144 / LSHB Ac4 / NCTC 3858a / NRRL 328 / USDA 3528.7).